A 415-amino-acid polypeptide reads, in one-letter code: GPI mannosyltransferase 1 (415 aa).

The next 9 helical transmembrane spans lie at 8-28 (PSLV…YGAW), 82-102 (FFSF…WLIA), 134-154 (TRGS…WAVL), 158-178 (ITLA…PFVY), 222-242 (LLLT…MYIL), 284-304 (FESL…PIVL), 329-349 (SQYF…SSLM), 354-374 (LGIT…QQGY), and 387-407 (GLFL…GIII).

This sequence belongs to the PIGM family.

It localises to the endoplasmic reticulum membrane. It participates in glycolipid biosynthesis; glycosylphosphatidylinositol-anchor biosynthesis. Its function is as follows. Mannosyltransferase involved in glycosylphosphatidylinositol-anchor biosynthesis. Transfers the first alpha-1,4-mannose to GlcN-acyl-PI during GPI precursor assembly. Required for cell wall integrity. In Aspergillus oryzae (strain ATCC 42149 / RIB 40) (Yellow koji mold), this protein is GPI mannosyltransferase 1 (gpi14).